Consider the following 548-residue polypeptide: Chaperonin GroEL (548 aa).

Residues Thr-30 to Pro-33, Lys-51, Asp-87 to Thr-91, Gly-415, Asn-479 to Ala-481, and Asp-495 contribute to the ATP site.

It belongs to the chaperonin (HSP60) family. In terms of assembly, forms a cylinder of 14 subunits composed of two heptameric rings stacked back-to-back. Interacts with the co-chaperonin GroES.

It localises to the cytoplasm. It carries out the reaction ATP + H2O + a folded polypeptide = ADP + phosphate + an unfolded polypeptide.. Its function is as follows. Together with its co-chaperonin GroES, plays an essential role in assisting protein folding. The GroEL-GroES system forms a nano-cage that allows encapsulation of the non-native substrate proteins and provides a physical environment optimized to promote and accelerate protein folding. In Pectobacterium carotovorum subsp. carotovorum (strain PC1), this protein is Chaperonin GroEL.